The chain runs to 380 residues: cAMP-dependent protein kinase type I-alpha regulatory subunit (380 aa).

The residue at position 1 (Met1) is an N-acetylmethionine. Ala2 carries the N-acetylalanine; in cAMP-dependent protein kinase type I-alpha regulatory subunit, N-terminally processed modification. A dimerization and phosphorylation region spans residues 2-135 (ASGSTASEEE…ALAKAIEKNV (134 aa)). 3 positions are modified to phosphoserine: Ser3, Ser76, and Ser82. Residues 64–96 (IQNLQKASARADSREDEISPPPPNPVVKGRRRR) form a disordered region. The Pseudophosphorylation motif motif lies at 95–99 (RRGAI). Residue Ser100 is modified to Phosphoserine. 3',5'-cyclic AMP is bound by residues 136-253 (LFSH…SKVS), Glu201, Arg210, 254-380 (ILES…SLSV), Glu325, and Arg334. Phosphoserine is present on Ser257.

It belongs to the cAMP-dependent kinase regulatory chain family. As to quaternary structure, the inactive holoenzyme is composed of two regulatory chains and two catalytic chains. Activation by cAMP releases the two active catalytic monomers and the regulatory dimer. Interacts with PRKACA and PRKACB. PRKAR1A also interacts with RFC2; the complex may be involved in cell survival. Interacts with AKAP4. Interacts with RARA; the interaction occurs in the presence of cAMP or FSH and regulates RARA transcriptional activity. Interacts with the phosphorylated form of PJA2. Interacts with CBFA2T3. Interacts with PRKX; regulates this cAMP-dependent protein kinase. Interacts with smAKAP; this interaction may target PRKAR1A to the plasma membrane. Interacts with AICDA. The pseudophosphorylation site binds to the substrate-binding region of the catalytic chain, resulting in the inhibition of its activity. As to expression, four types of regulatory chains are found: I-alpha, I-beta, II-alpha, and II-beta. Their expression varies among tissues and is in some cases constitutive and in others inducible.

The protein resides in the cell membrane. Regulatory subunit of the cAMP-dependent protein kinases involved in cAMP signaling in cells. This Sus scrofa (Pig) protein is cAMP-dependent protein kinase type I-alpha regulatory subunit (PRKAR1A).